The following is a 455-amino-acid chain: Asparagine--tRNA ligase (455 aa).

It belongs to the class-II aminoacyl-tRNA synthetase family. Homodimer.

It is found in the cytoplasm. It catalyses the reaction tRNA(Asn) + L-asparagine + ATP = L-asparaginyl-tRNA(Asn) + AMP + diphosphate + H(+). The sequence is that of Asparagine--tRNA ligase from Mycoplasma pneumoniae (strain ATCC 29342 / M129 / Subtype 1) (Mycoplasmoides pneumoniae).